We begin with the raw amino-acid sequence, 270 residues long: MIKDITIGQYVPGDSFIHKLDPRVKILISLIYIVDLFIVNSFKGYIFIVVFTLISILVSKVQFTYIYKGLKPIFILVLITAVLNIFMTGGANPPLFKWKFLVVYREGLIMAAFMALRLVFLIIGTSLLTLTTSPIELTDGIEKLLKPVSKIGVPSHELAMMMTIALRFIPTLMDETDKIMKAQIARGADLESGNLIQKAKNLVPILVPLFISSFRRADELAMAMEARCYRGGDGRTRMKELKLSNRDFIASLCALVLVCISILSRIWWGK.

4 consecutive transmembrane segments (helical) span residues 36-56 (LFIV…LISI), 72-92 (PIFI…GGAN), 108-128 (LIMA…TSLL), and 248-268 (FIAS…RIWW).

The protein belongs to the energy-coupling factor EcfT family. In terms of assembly, forms a stable energy-coupling factor (ECF) transporter complex composed of 2 membrane-embedded substrate-binding proteins (S component), 2 ATP-binding proteins (A component) and 2 transmembrane proteins (T component). May be able to interact with more than 1 S component at a time.

Its subcellular location is the cell membrane. In terms of biological role, transmembrane (T) component of an energy-coupling factor (ECF) ABC-transporter complex. Unlike classic ABC transporters this ECF transporter provides the energy necessary to transport a number of different substrates. This Clostridium kluyveri (strain ATCC 8527 / DSM 555 / NBRC 12016 / NCIMB 10680 / K1) protein is Energy-coupling factor transporter transmembrane protein EcfT.